The following is a 406-amino-acid chain: MTLNPTVLVINCGSSSIKFSVLTADNCEAVISGIADGIGTEKPFLRIDRVTQFQLAKWNYSDALAAIADELDKRGLSKSISLIGHRIAHGGEIFSESVLIDDRVVEEIKKVSPLAPLHNYANLHGVGAARQLFPGIKQVAVFDTGFHQTLKPEAYLYALPYRYFREQGVRRYGFHGTSYRYVVGEAASFLGFDGSDCGLIIAHLGNGASLCAVQDGKSVDTSMGMTPLEGLIMGTRSGDVDYGALAYLARQTGQSLEDLDHMVNKESGLLGISGLSADMRVLENAYHEGHEGARLAINTFVHRLARHIGGHASSLRRFDALIFTGGIGENSSLIRQLTLEHLAVFGIDIDHAKNKRLQHGTSQIITTARSRVTAAVIPTNEEKMIALDAIRLGYAQQGTVVLEAVI.

Residues Asn11 and Lys18 each coordinate ATP. Asn11 lines the Mg(2+) pocket. Position 86 (Arg86) interacts with substrate. Catalysis depends on Asp143, which acts as the Proton donor/acceptor. Residues His175, 203-207, 278-280, and 326-330 each bind ATP; these read HLGNG, DMR, and GIGEN.

The protein belongs to the acetokinase family. TdcD subfamily. As to quaternary structure, homodimer. The cofactor is Mg(2+).

The enzyme catalyses propanoate + ATP = propanoyl phosphate + ADP. The protein operates within amino-acid degradation; L-threonine degradation via propanoate pathway; propanoate from L-threonine: step 4/4. Catalyzes the conversion of propionyl phosphate and ADP to propionate and ATP. The chain is Propionate kinase from Yersinia enterocolitica serotype O:8 / biotype 1B (strain NCTC 13174 / 8081).